The following is a 486-amino-acid chain: MTTFYTVVSWLVILGYWVLIAGVTLRILMKRRAVPSAMAWLLIIYILPLVGIIAYLSVGELHLGKRRAERARAMWPSTAKWLNDLKACKHIFAQENSSVASSLFKLCERRQGIAGVKGNQLQLLTDSDDVMQALIRDIQLARHNIEMVFYIWQPGGMADQVAESLMAAARRGIHCRLMLDSAGSVAFFRSPWAAMMRNAGIEVVEALKVNLMRVFLRRMDLRQHRKMVMIDNYIAYTGSMNMVDPRFFKQDAGVGQWVDLMARMEGPVATAMGIVYSCDWEIETGKRILPPPPDVNIMPFEQASGHTIHTIASGPGFPEDLIHQALLTATYAAREYLIMTTPYFVPSDDLLHAICTAAQRGVDVSIILPRKNDSLLVGWASRAFFSELLAAGVKIYQFEGGLLHTKSVLVDGELSLVGTVNLDMRSLWLNFEITLVIDDTGFGADLAAVQDDYISRSRLLDARLWVKRPLWQRITERLFYFFSPLL.

2 helical membrane-spanning segments follow: residues 3–23 (TFYT…IAGV) and 38–58 (MAWL…YLSV). PLD phosphodiesterase domains are found at residues 219-246 (MDLR…VDPR) and 399-426 (EGGL…DMRS). Catalysis depends on residues His224, Lys226, Asp231, His404, Lys406, and Asp411.

It belongs to the phospholipase D family. Cardiolipin synthase subfamily. ClsA sub-subfamily.

The protein resides in the cell inner membrane. The catalysed reaction is 2 a 1,2-diacyl-sn-glycero-3-phospho-(1'-sn-glycerol) = a cardiolipin + glycerol. In terms of biological role, catalyzes the reversible phosphatidyl group transfer from one phosphatidylglycerol molecule to another to form cardiolipin (CL) (diphosphatidylglycerol) and glycerol. The sequence is that of Cardiolipin synthase A from Salmonella choleraesuis (strain SC-B67).